Here is a 158-residue protein sequence, read N- to C-terminus: Large ribosomal subunit protein uL15 (158 aa).

Residues 1–13 (MKLNEIKDNEGST) show a composition bias toward basic and acidic residues. Residues 1–45 (MKLNEIKDNEGSTHSRKRLGRGIGSGSGKTGGRGVKGQKSRSGVA) are disordered. Over residues 21–35 (RGIGSGSGKTGGRGV) the composition is skewed to gly residues.

It belongs to the universal ribosomal protein uL15 family. In terms of assembly, part of the 50S ribosomal subunit.

Functionally, binds to the 23S rRNA. This is Large ribosomal subunit protein uL15 from Rhizobium johnstonii (strain DSM 114642 / LMG 32736 / 3841) (Rhizobium leguminosarum bv. viciae).